The primary structure comprises 222 residues: Probable transaldolase (222 aa).

Catalysis depends on K91, which acts as the Schiff-base intermediate with substrate.

It belongs to the transaldolase family. Type 3B subfamily.

It is found in the cytoplasm. It catalyses the reaction D-sedoheptulose 7-phosphate + D-glyceraldehyde 3-phosphate = D-erythrose 4-phosphate + beta-D-fructose 6-phosphate. The protein operates within carbohydrate degradation; pentose phosphate pathway; D-glyceraldehyde 3-phosphate and beta-D-fructose 6-phosphate from D-ribose 5-phosphate and D-xylulose 5-phosphate (non-oxidative stage): step 2/3. Functionally, transaldolase is important for the balance of metabolites in the pentose-phosphate pathway. The polypeptide is Probable transaldolase (Chlorobaculum parvum (strain DSM 263 / NCIMB 8327) (Chlorobium vibrioforme subsp. thiosulfatophilum)).